A 126-amino-acid polypeptide reads, in one-letter code: Glycine cleavage system H protein (126 aa).

In terms of domain architecture, Lipoyl-binding spans 22-104 (VATIGITEYA…YEKAWMVKIE (83 aa)). At lysine 63 the chain carries N6-lipoyllysine.

This sequence belongs to the GcvH family. As to quaternary structure, the glycine cleavage system is composed of four proteins: P, T, L and H. Requires (R)-lipoate as cofactor.

Its function is as follows. The glycine cleavage system catalyzes the degradation of glycine. The H protein shuttles the methylamine group of glycine from the P protein to the T protein. In terms of biological role, is also involved in protein lipoylation via its role as an octanoyl/lipoyl carrier protein intermediate. The chain is Glycine cleavage system H protein from Staphylococcus epidermidis (strain ATCC 35984 / DSM 28319 / BCRC 17069 / CCUG 31568 / BM 3577 / RP62A).